A 221-amino-acid polypeptide reads, in one-letter code: Putative hemin import ATP-binding protein HrtA (221 aa).

Residues 3 to 221 (LVVKDIVKNF…IELEDGKITD (219 aa)) enclose the ABC transporter domain. 39-46 (GASGSGKT) is a binding site for ATP.

The protein belongs to the ABC transporter superfamily. HrtA family. In terms of assembly, the complex is composed of two ATP-binding proteins (HrtA), two transmembrane proteins (HrtB) and a solute-binding protein.

The protein localises to the cell membrane. Functionally, part of the ABC transporter complex hrt involved in hemin import. Responsible for energy coupling to the transport system. In Staphylococcus aureus (strain Mu50 / ATCC 700699), this protein is Putative hemin import ATP-binding protein HrtA (hrtA).